A 170-amino-acid chain; its full sequence is MKEEKKLLLQEVEEKISASQGFILLRYLGFTAAHSREFRNSLSGVSAEFEVLKKRIFFKAIQSAGFDIDSSDTSGHLGVVFAYDDAVSAAKQVLDFNKQHNDSLVFLAGRIDSANLSGKEVEAVAKLPSMKELRQQIVGLIAAPMSQVVGIMGSALSGVVSCIDQKIQKN.

Belongs to the universal ribosomal protein uL10 family. Part of the ribosomal stalk of the 50S ribosomal subunit. The N-terminus interacts with L11 and the large rRNA to form the base of the stalk. The C-terminus forms an elongated spine to which L12 dimers bind in a sequential fashion forming a multimeric L10(L12)X complex.

In terms of biological role, forms part of the ribosomal stalk, playing a central role in the interaction of the ribosome with GTP-bound translation factors. This Chlamydia felis (strain Fe/C-56) (Chlamydophila felis) protein is Large ribosomal subunit protein uL10.